Consider the following 336-residue polypeptide: Holliday junction branch migration complex subunit RuvB (336 aa).

A large ATPase domain (RuvB-L) region spans residues alanine 4 to tyrosine 184. ATP contacts are provided by residues isoleucine 23, arginine 24, glycine 65, lysine 68, threonine 69, threonine 70, glutamate 131–tyrosine 133, arginine 174, tyrosine 184, and arginine 221. Threonine 69 serves as a coordination point for Mg(2+). Residues glutamine 185–asparagine 255 form a small ATPAse domain (RuvB-S) region. Residues alanine 258–proline 336 form a head domain (RuvB-H) region. Residues arginine 294, arginine 313, and arginine 318 each contribute to the DNA site.

Belongs to the RuvB family. Homohexamer. Forms an RuvA(8)-RuvB(12)-Holliday junction (HJ) complex. HJ DNA is sandwiched between 2 RuvA tetramers; dsDNA enters through RuvA and exits via RuvB. An RuvB hexamer assembles on each DNA strand where it exits the tetramer. Each RuvB hexamer is contacted by two RuvA subunits (via domain III) on 2 adjacent RuvB subunits; this complex drives branch migration. In the full resolvosome a probable DNA-RuvA(4)-RuvB(12)-RuvC(2) complex forms which resolves the HJ.

The protein localises to the cytoplasm. The enzyme catalyses ATP + H2O = ADP + phosphate + H(+). Functionally, the RuvA-RuvB-RuvC complex processes Holliday junction (HJ) DNA during genetic recombination and DNA repair, while the RuvA-RuvB complex plays an important role in the rescue of blocked DNA replication forks via replication fork reversal (RFR). RuvA specifically binds to HJ cruciform DNA, conferring on it an open structure. The RuvB hexamer acts as an ATP-dependent pump, pulling dsDNA into and through the RuvAB complex. RuvB forms 2 homohexamers on either side of HJ DNA bound by 1 or 2 RuvA tetramers; 4 subunits per hexamer contact DNA at a time. Coordinated motions by a converter formed by DNA-disengaged RuvB subunits stimulates ATP hydrolysis and nucleotide exchange. Immobilization of the converter enables RuvB to convert the ATP-contained energy into a lever motion, pulling 2 nucleotides of DNA out of the RuvA tetramer per ATP hydrolyzed, thus driving DNA branch migration. The RuvB motors rotate together with the DNA substrate, which together with the progressing nucleotide cycle form the mechanistic basis for DNA recombination by continuous HJ branch migration. Branch migration allows RuvC to scan DNA until it finds its consensus sequence, where it cleaves and resolves cruciform DNA. The protein is Holliday junction branch migration complex subunit RuvB of Enterobacter sp. (strain 638).